Reading from the N-terminus, the 136-residue chain is MKKSGILNKELNTLLASLGHTDTIVIADCGLPIPNEQARIDLSLVKGFPPFLSVLDAVVDELEIEAIVLAEEIKDQNPDLYESIRARMGGVPVQFVPHEQFKAMTKQAKAVIRTGEATPYANIILRSGVSFSSKDF.

Histidine 20 (proton donor) is an active-site residue. Residues aspartate 28, histidine 98, and tyrosine 120–asparagine 122 each bind substrate.

The protein belongs to the RbsD / FucU family. RbsD subfamily. As to quaternary structure, homodecamer.

The protein localises to the cytoplasm. The catalysed reaction is beta-D-ribopyranose = beta-D-ribofuranose. Its pathway is carbohydrate metabolism; D-ribose degradation; D-ribose 5-phosphate from beta-D-ribopyranose: step 1/2. Its function is as follows. Catalyzes the interconversion of beta-pyran and beta-furan forms of D-ribose. The chain is D-ribose pyranase from Geobacillus kaustophilus (strain HTA426).